Reading from the N-terminus, the 345-residue chain is Succinylglutamate desuccinylase (345 aa).

H64, E67, and H161 together coordinate Zn(2+). Residue E225 is part of the active site.

Belongs to the AspA/AstE family. Succinylglutamate desuccinylase subfamily. It depends on Zn(2+) as a cofactor.

The catalysed reaction is N-succinyl-L-glutamate + H2O = L-glutamate + succinate. The protein operates within amino-acid degradation; L-arginine degradation via AST pathway; L-glutamate and succinate from L-arginine: step 5/5. Transforms N(2)-succinylglutamate into succinate and glutamate. This Shewanella piezotolerans (strain WP3 / JCM 13877) protein is Succinylglutamate desuccinylase.